A 383-amino-acid chain; its full sequence is Protein FAM217B (383 aa).

Disordered regions lie at residues 1–70 (MNAG…CQGA), 89–115 (ADED…PPDL), 200–222 (KAKG…KSPG), 232–251 (SKPL…RKKA), 284–325 (QTLE…HIRV), and 338–383 (SCKA…YKLK). Residues 8-43 (NKVQHSKNSSGKRQSKSQVPHASSQPRSSLTAVTQP) are compositionally biased toward polar residues. Basic and acidic residues predominate over residues 44-56 (TEEKLKESISPEA). A compositionally biased stretch (polar residues) spans 374–383 (GVKQNTYKLK).

Belongs to the FAM217 family.

The sequence is that of Protein FAM217B (FAM217B) from Homo sapiens (Human).